We begin with the raw amino-acid sequence, 425 residues long: Serine--tRNA ligase (425 aa).

233-235 (TAE) serves as a coordination point for L-serine. An ATP-binding site is contributed by 264 to 266 (RRE). E287 contacts L-serine. 351–354 (EISS) provides a ligand contact to ATP. Residue S385 participates in L-serine binding.

This sequence belongs to the class-II aminoacyl-tRNA synthetase family. Type-1 seryl-tRNA synthetase subfamily. Homodimer. The tRNA molecule binds across the dimer.

It is found in the cytoplasm. It carries out the reaction tRNA(Ser) + L-serine + ATP = L-seryl-tRNA(Ser) + AMP + diphosphate + H(+). The catalysed reaction is tRNA(Sec) + L-serine + ATP = L-seryl-tRNA(Sec) + AMP + diphosphate + H(+). The protein operates within aminoacyl-tRNA biosynthesis; selenocysteinyl-tRNA(Sec) biosynthesis; L-seryl-tRNA(Sec) from L-serine and tRNA(Sec): step 1/1. Catalyzes the attachment of serine to tRNA(Ser). Is also able to aminoacylate tRNA(Sec) with serine, to form the misacylated tRNA L-seryl-tRNA(Sec), which will be further converted into selenocysteinyl-tRNA(Sec). The polypeptide is Serine--tRNA ligase (Prochlorococcus marinus (strain SARG / CCMP1375 / SS120)).